The sequence spans 198 residues: Probable nicotinate-nucleotide adenylyltransferase (198 aa).

Belongs to the NadD family.

The enzyme catalyses nicotinate beta-D-ribonucleotide + ATP + H(+) = deamido-NAD(+) + diphosphate. The protein operates within cofactor biosynthesis; NAD(+) biosynthesis; deamido-NAD(+) from nicotinate D-ribonucleotide: step 1/1. In terms of biological role, catalyzes the reversible adenylation of nicotinate mononucleotide (NaMN) to nicotinic acid adenine dinucleotide (NaAD). The chain is Probable nicotinate-nucleotide adenylyltransferase from Chlorobium limicola (strain DSM 245 / NBRC 103803 / 6330).